A 123-amino-acid chain; its full sequence is MAAASPTRAGQAAETQALEYLQGQGLQLLARNWRCKGGELDLVMLDADTVVFVEVRYRLHAGFGGALDSIDGRKQKRLVLAASLFLQKEAHWGNHPCRFDVVALQGSHHAGRPLQWLKNAFEC.

This sequence belongs to the UPF0102 family.

The polypeptide is UPF0102 protein Pput_4400 (Pseudomonas putida (strain ATCC 700007 / DSM 6899 / JCM 31910 / BCRC 17059 / LMG 24140 / F1)).